A 298-amino-acid polypeptide reads, in one-letter code: Tyrosine recombinase XerD (298 aa).

The region spanning 3 to 88 (SSHNNLLQNF…AIRQFYKFLK (86 aa)) is the Core-binding (CB) domain. Residues 109 to 292 (SIPDYLTQDE…ANKTLREVHK (184 aa)) enclose the Tyr recombinase domain. Residues arginine 149, lysine 173, histidine 244, arginine 247, and histidine 270 contribute to the active site. Residue tyrosine 279 is the O-(3'-phospho-DNA)-tyrosine intermediate of the active site.

Belongs to the 'phage' integrase family. XerD subfamily. Forms a cyclic heterotetrameric complex composed of two molecules of XerC and two molecules of XerD.

Its subcellular location is the cytoplasm. Functionally, site-specific tyrosine recombinase, which acts by catalyzing the cutting and rejoining of the recombining DNA molecules. The XerC-XerD complex is essential to convert dimers of the bacterial chromosome into monomers to permit their segregation at cell division. It also contributes to the segregational stability of plasmids. The protein is Tyrosine recombinase XerD of Leptospira interrogans serogroup Icterohaemorrhagiae serovar copenhageni (strain Fiocruz L1-130).